Reading from the N-terminus, the 886-residue chain is Peptidyl-lysine N-acetyltransferase PatZ (886 aa).

Residues 487-523 (QPILQAYGMNTLPTWIASDSTEAVHIAEQIGYPVALK) form the ATP-grasp domain. Residues 726–881 (CLFRPILPED…GIVGLTLNLA (156 aa)) form the N-acetyltransferase domain.

In the N-terminal section; belongs to the acetate CoA ligase alpha subunit family. The protein in the central section; belongs to the acetate CoA ligase beta subunit family. In terms of assembly, stable tetramer in solution. Oligomerizes to an octameric form by autoacetylation. In terms of processing, autoacetylated. Deacetylated by CobB.

It catalyses the reaction L-lysyl-[protein] + acetyl-CoA = N(6)-acetyl-L-lysyl-[protein] + CoA + H(+). Catalyzes the acetyl-CoA-dependent acetylation of lysine residues of a large number of target proteins. Acetylates RNase R in exponential phase cells and RNase II. Required for the glucose-dependent acetylation on multiple lysines of alpha, beta and beta' RNAP subunits. Also acetylates acetyl-coenzyme A synthetase (Acs) and the chromosomal replication initiator protein DnaA, and inhibits their activity. Overexpression leads to the acetylation of a large number of additional proteins and inhibits motility. The polypeptide is Peptidyl-lysine N-acetyltransferase PatZ (Escherichia coli (strain K12)).